We begin with the raw amino-acid sequence, 453 residues long: Trigger factor (453 aa).

Residues Gly171–Ile256 enclose the PPIase FKBP-type domain.

Belongs to the FKBP-type PPIase family. Tig subfamily.

It is found in the cytoplasm. It carries out the reaction [protein]-peptidylproline (omega=180) = [protein]-peptidylproline (omega=0). Functionally, involved in protein export. Acts as a chaperone by maintaining the newly synthesized protein in an open conformation. Functions as a peptidyl-prolyl cis-trans isomerase. The polypeptide is Trigger factor (Nitrobacter hamburgensis (strain DSM 10229 / NCIMB 13809 / X14)).